A 71-amino-acid polypeptide reads, in one-letter code: Putative membrane protein insertion efficiency factor (71 aa).

Belongs to the UPF0161 family.

The protein localises to the cell membrane. Functionally, could be involved in insertion of integral membrane proteins into the membrane. In Acetivibrio thermocellus (strain ATCC 27405 / DSM 1237 / JCM 9322 / NBRC 103400 / NCIMB 10682 / NRRL B-4536 / VPI 7372) (Clostridium thermocellum), this protein is Putative membrane protein insertion efficiency factor.